Here is a 274-residue protein sequence, read N- to C-terminus: Orotidine 5'-phosphate decarboxylase (274 aa).

Residue Lys-96 is the Proton donor of the active site.

This sequence belongs to the OMP decarboxylase family. Type 2 subfamily.

The enzyme catalyses orotidine 5'-phosphate + H(+) = UMP + CO2. It participates in pyrimidine metabolism; UMP biosynthesis via de novo pathway; UMP from orotate: step 2/2. The polypeptide is Orotidine 5'-phosphate decarboxylase (Bacteroides fragilis (strain ATCC 25285 / DSM 2151 / CCUG 4856 / JCM 11019 / LMG 10263 / NCTC 9343 / Onslow / VPI 2553 / EN-2)).